Here is a 188-residue protein sequence, read N- to C-terminus: MSMLHQQKRKNHFVFLPLVILLAVCALLFIGLQQDPQKIASALIGKPVPTFSQADLLRTERRVTQQDLPQQTFLLNVWGSWCAYCKKEHPFLMQLAKSMPIVGLNYRDNPQNALAMLNQLGNPFQLVINDSRGELALNLGVDGAPETYLIDQYGVIRYRYSGPLTPEVWQEMFIPEWQKLEAENAKVR.

The Cytoplasmic portion of the chain corresponds to 1–11 (MSMLHQQKRKN). Residues 12-32 (HFVFLPLVILLAVCALLFIGL) form a helical membrane-spanning segment. Over 33–188 (QQDPQKIASA…KLEAENAKVR (156 aa)) the chain is Periplasmic. The 138-residue stretch at 42–179 (ALIGKPVPTF…QEMFIPEWQK (138 aa)) folds into the Thioredoxin domain. A disulfide bridge connects residues Cys82 and Cys85.

This sequence belongs to the thioredoxin family. DsbE subfamily.

It is found in the cell inner membrane. In terms of biological role, could be involved in disulfide bond formation. Could catalyzes a late, reductive step in the assembly of periplasmic NrfA c-type cytochrome, probably the reduction of disulfide bonds of the apocytochrome c to allow covalent linkage with the heme. Possible subunit of a heme lyase. In Pasteurella multocida (strain Pm70), this protein is Probable thiol:disulfide interchange protein DsbE-2 (nrfX).